A 113-amino-acid chain; its full sequence is Beta-microseminoprotein A1 (113 aa).

The N-terminal stretch at Met-1–Gly-20 is a signal peptide. Intrachain disulfides connect Cys-22/Cys-70, Cys-38/Cys-62, Cys-57/Cys-93, Cys-60/Cys-69, and Cys-84/Cys-107.

Belongs to the beta-microseminoprotein family.

It localises to the secreted. This Saguinus oedipus (Cotton-top tamarin) protein is Beta-microseminoprotein A1 (MSPA).